Reading from the N-terminus, the 203-residue chain is Urease accessory protein UreG (203 aa).

Residue 11–18 (GPVGSGKT) coordinates GTP.

Belongs to the SIMIBI class G3E GTPase family. UreG subfamily. In terms of assembly, homodimer. UreD, UreF and UreG form a complex that acts as a GTP-hydrolysis-dependent molecular chaperone, activating the urease apoprotein by helping to assemble the nickel containing metallocenter of UreC. The UreE protein probably delivers the nickel.

It is found in the cytoplasm. Functionally, facilitates the functional incorporation of the urease nickel metallocenter. This process requires GTP hydrolysis, probably effectuated by UreG. This Prochlorococcus marinus (strain AS9601) protein is Urease accessory protein UreG.